A 427-amino-acid polypeptide reads, in one-letter code: Proteinase-activated receptor 1 (427 aa).

An N-terminal signal peptide occupies residues 1 to 21; that stretch reads MGPRWLLLWAAGLGLCSPLVS. A propeptide spans 22-41 (removed for receptor activation); the sequence is ARTRGPRPGTDPTNGTLGPR. The disordered stretch occupies residues 23 to 87; that stretch reads RTRGPRPGTD…RSSPPQKSPP (65 aa). A glycan (N-linked (GlcNAc...) asparagine) is linked at N35. Residues 42–104 lie on the Extracellular side of the membrane; sequence SFFLRNSNDG…SGYLTSAWLT (63 aa). Residues 58–68 are compositionally biased toward acidic residues; the sequence is PEDEDSSEGEF. An N-linked (GlcNAc...) asparagine glycan is attached at N77. Residues 105-130 form a helical membrane-spanning segment; sequence VFIPSVYTGVFLVSLPLNIMAVVVFV. The Cytoplasmic portion of the chain corresponds to 131-139; that stretch reads LKMKVKKPA. A helical membrane pass occupies residues 140–159; sequence VVYMLHLAAADVLFVCVLPF. At 160-178 the chain is on the extracellular side; it reads KISYYFSGSDWRFGSAMCR. The cysteines at positions 177 and 256 are disulfide-linked. A helical membrane pass occupies residues 179–200; that stretch reads FVTAAFYGNMYASIMLMTAISV. The Cytoplasmic portion of the chain corresponds to 201-220; the sequence is DRFLAVVYPIQSLSWRTLGR. The helical transmembrane segment at 221-241 threads the bilayer; the sequence is ASFICLAIWAMAIAGVAPLLL. Residues 242–270 lie on the Extracellular side of the membrane; the sequence is QEQATQVPGLNITACHDVLNQTLLEGYYS. Residues N252 and N261 are each glycosylated (N-linked (GlcNAc...) asparagine). A helical transmembrane segment spans residues 271-290; the sequence is YYFSAFSAVFFFVPLTLSTV. The Cytoplasmic segment spans residues 291–313; sequence SYVSIIRCLSSSTVANQNKKSRA. A helical transmembrane segment spans residues 314–336; sequence LLLSAAVFCIFILCFGPTNILLL. Residues 337–351 are Extracellular-facing; the sequence is LHYAFLSSDPMTEAA. Residues 352 to 376 form a helical membrane-spanning segment; that stretch reads YFAYLLCVCVSSISCCIDPLIYYYA. At 377–427 the chain is on the cytoplasmic side; sequence SSECQRHLFAILHCKESSDPGSCNSSGQLMPSKMDTCSSNLSSSLYKKLLT. S420 is modified (phosphoserine).

Belongs to the G-protein coupled receptor 1 family. Post-translationally, proteolytic cleavage by thrombin generates a new N-terminus that functions as a tethered ligand. Also proteolytically cleaved by cathepsin CTSG. In terms of processing, phosphorylated in the C-terminal tail; probably mediating desensitization prior to the uncoupling and internalization of the receptor.

Its subcellular location is the cell membrane. Its function is as follows. High affinity receptor that binds the activated thrombin, leading to calcium release from intracellular stores. The thrombin-activated receptor signaling pathway is mediated through PTX-insensitive G proteins, activation of phospholipase C resulting in the production of 1D-myo-inositol 1,4,5-trisphosphate (InsP3) which binds to InsP3 receptors causing calcium release from the stores. In astrocytes, the calcium released into the cytosol allows the Ca(2+)-dependent release of L-glutamate into the synaptic cleft through BEST1, that targets the neuronal postsynaptic GRIN2A/NMDAR receptor resulting in the synaptic plasticity regulation. May play a role in platelets activation and in vascular development. Mediates up-regulation of pro-inflammatory cytokines, such as MCP-1/CCL2 and IL6, triggered by coagulation factor Xa (F10) in cardiac fibroblasts and umbilical vein endothelial cells. This chain is Proteinase-activated receptor 1, found in Bos taurus (Bovine).